The chain runs to 311 residues: Thioredoxin reductase (311 aa).

FAD is bound by residues 15–18 (SGPA), 37–44 (EGTQFGGA), N53, and V86. C137 and C140 are disulfide-bonded. Residues S158, H177, R183, I240, and Y260 each contribute to the NADP(+) site. FAD-binding positions include D280 and 287–290 (RQAI). R287 is an NADP(+) binding site.

This sequence belongs to the class-II pyridine nucleotide-disulfide oxidoreductase family. As to quaternary structure, homodimer. The cofactor is FAD.

Its subcellular location is the cytoplasm. The enzyme catalyses [thioredoxin]-dithiol + NADP(+) = [thioredoxin]-disulfide + NADPH + H(+). In Mycolicibacterium smegmatis (Mycobacterium smegmatis), this protein is Thioredoxin reductase.